The sequence spans 487 residues: GlcNAc-binding protein A (487 aa).

Positions 1 to 29 are cleaved as a signal peptide; that stretch reads MKKLPNKSLIALALLSVSGASFGHGYVSA. Residues 30 to 201 form the Chitin-binding type-4 domain; the sequence is YENGVAEGRA…SFYNVIDVKF (172 aa). One can recognise a Chitin-binding type-3 domain in the interval 438 to 479; that stretch reads AGTKVLASDGAVYQCKEFPFSGYCTQWSPSATQFEPGKGSHW.

It belongs to the GbpA family.

The protein resides in the secreted. Functionally, probably interacts with GlcNAc residues. May promote attachment to both epithelial cell surfaces and chitin. The sequence is that of GlcNAc-binding protein A from Vibrio campbellii (strain ATCC BAA-1116).